A 444-amino-acid chain; its full sequence is Phosphoglucosamine mutase (444 aa).

Ser-102 (phosphoserine intermediate) is an active-site residue. Mg(2+) contacts are provided by Ser-102, Asp-241, Asp-243, and Asp-245. Ser-102 is modified (phosphoserine).

It belongs to the phosphohexose mutase family. The cofactor is Mg(2+). Post-translationally, activated by phosphorylation.

It catalyses the reaction alpha-D-glucosamine 1-phosphate = D-glucosamine 6-phosphate. Its function is as follows. Catalyzes the conversion of glucosamine-6-phosphate to glucosamine-1-phosphate. The polypeptide is Phosphoglucosamine mutase (Erwinia tasmaniensis (strain DSM 17950 / CFBP 7177 / CIP 109463 / NCPPB 4357 / Et1/99)).